The chain runs to 305 residues: Ribonucleoside-diphosphate reductase small subunit (305 aa).

Positions 64, 94, and 97 each coordinate Fe cation. Residue Tyr101 is part of the active site. Residues 150–170 traverse the membrane as a helical segment; the sequence is ILLFLLVEGIFFISSFFSIGL. Glu157, Glu191, and His194 together coordinate Fe cation.

This sequence belongs to the ribonucleoside diphosphate reductase small chain family. As to quaternary structure, heterotetramer composed of a homodimer of the large subunit (R1) and a homodimer of the small subunit (R2). Larger multisubunit protein complex are also active, composed of (R1)n(R2)n. Fe cation is required as a cofactor.

Its subcellular location is the host membrane. It catalyses the reaction a 2'-deoxyribonucleoside 5'-diphosphate + [thioredoxin]-disulfide + H2O = a ribonucleoside 5'-diphosphate + [thioredoxin]-dithiol. Functionally, ribonucleoside-diphosphate reductase holoenzyme provides the precursors necessary for viral DNA synthesis. Allows virus growth in non-dividing cells, as well as reactivation from latency in infected hosts. Catalyzes the biosynthesis of deoxyribonucleotides from the corresponding ribonucleotides. The polypeptide is Ribonucleoside-diphosphate reductase small subunit (Saimiri sciureus (Common squirrel monkey)).